Consider the following 275-residue polypeptide: Dermonecrotic toxin LamSicTox-alphaIV1iii (275 aa).

His5 is an active-site residue. Glu25 and Asp27 together coordinate Mg(2+). Residue His41 is the Nucleophile of the active site. Intrachain disulfides connect Cys45–Cys51 and Cys47–Cys192. Asp85 serves as a coordination point for Mg(2+).

It belongs to the arthropod phospholipase D family. Class II subfamily. Requires Mg(2+) as cofactor. In terms of tissue distribution, expressed by the venom gland.

The protein resides in the secreted. The enzyme catalyses an N-(acyl)-sphingosylphosphocholine = an N-(acyl)-sphingosyl-1,3-cyclic phosphate + choline. The catalysed reaction is an N-(acyl)-sphingosylphosphoethanolamine = an N-(acyl)-sphingosyl-1,3-cyclic phosphate + ethanolamine. It catalyses the reaction a 1-acyl-sn-glycero-3-phosphocholine = a 1-acyl-sn-glycero-2,3-cyclic phosphate + choline. It carries out the reaction a 1-acyl-sn-glycero-3-phosphoethanolamine = a 1-acyl-sn-glycero-2,3-cyclic phosphate + ethanolamine. In terms of biological role, dermonecrotic toxins cleave the phosphodiester linkage between the phosphate and headgroup of certain phospholipids (sphingolipid and lysolipid substrates), forming an alcohol (often choline) and a cyclic phosphate. This toxin acts on sphingomyelin (SM). It may also act on ceramide phosphoethanolamine (CPE), lysophosphatidylcholine (LPC) and lysophosphatidylethanolamine (LPE), but not on lysophosphatidylserine (LPS), and lysophosphatidylglycerol (LPG). It acts by transphosphatidylation, releasing exclusively cyclic phosphate products as second products. Induces dermonecrosis, hemolysis, increased vascular permeability, edema, inflammatory response, and platelet aggregation. This Loxosceles amazonica (Recluse spider) protein is Dermonecrotic toxin LamSicTox-alphaIV1iii.